Here is a 307-residue protein sequence, read N- to C-terminus: Elongation factor Ts (307 aa).

Residues threonine 80–valine 83 form an involved in Mg(2+) ion dislocation from EF-Tu region.

This sequence belongs to the EF-Ts family.

Its subcellular location is the cytoplasm. Its function is as follows. Associates with the EF-Tu.GDP complex and induces the exchange of GDP to GTP. It remains bound to the aminoacyl-tRNA.EF-Tu.GTP complex up to the GTP hydrolysis stage on the ribosome. The protein is Elongation factor Ts of Bradyrhizobium sp. (strain ORS 278).